The chain runs to 325 residues: Geranylgeranyl transferase type-2 subunit beta (325 aa).

6 PFTB repeats span residues 9 to 50 (KEKH…CVLD), 57 to 99 (KEEV…ATYD), 109 to 150 (KVRL…SILG), 157 to 198 (VDPA…AIAN), 208 to 249 (LEEI…AIIG), and 256 to 298 (YEKL…SLMG). Geranylgeranyl diphosphate is bound by residues 183-185 (HAA) and 228-240 (RPSK…YSWW). Zn(2+) contacts are provided by Asp-234, Cys-236, and His-286.

The protein belongs to the protein prenyltransferase subunit beta family. Heterodimer of an alpha and a beta subunit. Requires Zn(2+) as cofactor.

It catalyses the reaction geranylgeranyl diphosphate + L-cysteinyl-[protein] = S-geranylgeranyl-L-cysteinyl-[protein] + diphosphate. In terms of biological role, catalyzes the transfer of a geranyl-geranyl moiety from geranyl-geranyl pyrophosphate to proteins having the C-terminal -XCC or -XCXC, where both cysteines may become modified. Acts on YPT1 and SEC4. This chain is Geranylgeranyl transferase type-2 subunit beta (BET2), found in Saccharomyces cerevisiae (strain ATCC 204508 / S288c) (Baker's yeast).